The following is a 530-amino-acid chain: Proline--tRNA ligase, cytoplasmic (530 aa).

The protein belongs to the class-II aminoacyl-tRNA synthetase family.

The protein localises to the cytoplasm. Its subcellular location is the cytosol. The catalysed reaction is tRNA(Pro) + L-proline + ATP = L-prolyl-tRNA(Pro) + AMP + diphosphate. Functionally, catalyzes the attachment of proline to tRNA(Pro) in a two-step reaction: proline is first activated by ATP to form Pro-AMP and then transferred to the acceptor end of tRNA(Pro). The protein is Proline--tRNA ligase, cytoplasmic of Arabidopsis thaliana (Mouse-ear cress).